Reading from the N-terminus, the 412-residue chain is DNA polymerase IV 2 (412 aa).

The region spanning 7-192 (IFLVDMQSFY…LPVGSMFGVG (186 aa)) is the UmuC domain. Mg(2+) is bound by residues D11 and D107. E108 is a catalytic residue.

It belongs to the DNA polymerase type-Y family. In terms of assembly, monomer. The cofactor is Mg(2+).

It localises to the cytoplasm. It carries out the reaction DNA(n) + a 2'-deoxyribonucleoside 5'-triphosphate = DNA(n+1) + diphosphate. Functionally, poorly processive, error-prone DNA polymerase involved in untargeted mutagenesis. Copies undamaged DNA at stalled replication forks, which arise in vivo from mismatched or misaligned primer ends. These misaligned primers can be extended by PolIV. Exhibits no 3'-5' exonuclease (proofreading) activity. May be involved in translesion synthesis (TSL), in conjunction with the beta clamp from PolIII. This Bacillus subtilis (strain 168) protein is DNA polymerase IV 2 (dinB2).